A 413-amino-acid chain; its full sequence is Probable short/branched chain specific acyl-CoA dehydrogenase (413 aa).

FAD-binding positions include 152-161 (FCLSESGSGS) and 186-188 (WIT). S161 lines the substrate pocket. Residues Y208, Y262, and 270 to 273 (NEGR) contribute to the substrate site. Residues R298, Q309, and 366–370 (SMLGG) each bind FAD. E393 (proton acceptor) is an active-site residue. Position 395 to 397 (395 to 397 (TSN)) interacts with FAD.

This sequence belongs to the acyl-CoA dehydrogenase family. In terms of assembly, homotetramer. FAD is required as a cofactor.

It carries out the reaction 2-methylbutanoyl-CoA + oxidized [electron-transfer flavoprotein] + H(+) = (2E)-2-methylbut-2-enoyl-CoA + reduced [electron-transfer flavoprotein]. The protein operates within lipid metabolism; mitochondrial fatty acid beta-oxidation. It participates in amino-acid degradation; L-isoleucine degradation. Probable short and branched chain specific acyl-CoA dehydrogenase that catalyzes the removal of one hydrogen from C-2 and C-3 of the fatty acyl-CoA thioester, resulting in the formation of trans-2-enoyl-CoA. This Dictyostelium discoideum (Social amoeba) protein is Probable short/branched chain specific acyl-CoA dehydrogenase (acadsb).